We begin with the raw amino-acid sequence, 134 residues long: Replication enhancer protein (134 aa).

This sequence belongs to the geminiviridae replication enhancer protein family. Homooligomer. Interacts with the replication-associated protein (REP). Interacts with host proliferating cell nuclear antigen (PCNA). Interacts with host retinoblastoma-related protein 1 (RBR1), and may thereby deregulate the host cell cycle. Oligomerization and interaction with PCNA are necessary for optimal replication enhancement.

In terms of biological role, increases viral DNA accumulation. Enhances infectivity and symptom expression. This Manihot esculenta (Cassava) protein is Replication enhancer protein.